A 240-amino-acid chain; its full sequence is Small ribosomal subunit protein uS2c (240 aa).

The protein belongs to the universal ribosomal protein uS2 family.

The protein resides in the plastid. The protein localises to the chloroplast. This is Small ribosomal subunit protein uS2c (rps2) from Cycas taitungensis (Prince sago).